The primary structure comprises 361 residues: MKDSVIRKLEGLLERNEEVLALLSDAGVIADQERFRALSKEYSQLEDVVSTFKSFQQAEEDLESAKEMMEEDDPELKEMAQEEYKVAKSAIAALEDELQILLLPKDPNDDNNCFIEIRAGAGGDEAAIFAGDLFRMYSRYAESKRWQIEVMNTNEGEHGGFKEVIAKISGEGVYGKLKFESGGHRVQRVPETESQGRVHTSACTVIVLPEVPEAEAIEINKADLKVDTFRASGAGGQHVNKTDSAIRITHIPTGIVVECQDQRSQHKNRAQAMSVLAARIQAVEDEKRRSAEESTRRNLVSSGDRSERIRTYNFPQGRVSEHRINLTLYRLGEFMEGDIDCVVEPLIQENQADMLAALGEG.

Q237 bears the N5-methylglutamine mark. Over residues 286 to 296 (EKRRSAEESTR) the composition is skewed to basic and acidic residues. A disordered region spans residues 286 to 305 (EKRRSAEESTRRNLVSSGDR).

Belongs to the prokaryotic/mitochondrial release factor family. Methylated by PrmC. Methylation increases the termination efficiency of RF1.

It localises to the cytoplasm. Functionally, peptide chain release factor 1 directs the termination of translation in response to the peptide chain termination codons UAG and UAA. The protein is Peptide chain release factor 1 of Shewanella pealeana (strain ATCC 700345 / ANG-SQ1).